The sequence spans 249 residues: Triosephosphate isomerase (249 aa).

2 residues coordinate substrate: Asn-10 and Lys-12. His-94 acts as the Electrophile in catalysis. The active-site Proton acceptor is the Glu-166.

The protein belongs to the triosephosphate isomerase family. In terms of assembly, homodimer. The N-terminus is blocked.

The enzyme catalyses D-glyceraldehyde 3-phosphate = dihydroxyacetone phosphate. Its pathway is carbohydrate biosynthesis; gluconeogenesis. It functions in the pathway carbohydrate degradation; glycolysis; D-glyceraldehyde 3-phosphate from glycerone phosphate: step 1/1. The protein is Triosephosphate isomerase (TPI1) of Paracoccidioides lutzii (strain ATCC MYA-826 / Pb01) (Paracoccidioides brasiliensis).